A 576-amino-acid chain; its full sequence is Protein HYPER-SENSITIVITY-RELATED 4 (576 aa).

A helical membrane pass occupies residues 55–75 (LATAKTVLTTAASVAATAMLA). Position 306–313 (306–313 (GPPGTGKS)) interacts with ATP. Positions 508-532 (DKAKTEKQELENKKKTKEGTDSVVK) are disordered.

Belongs to the AAA ATPase family. BCS1 subfamily. As to quaternary structure, binds to the Yariv phenylglycoside (beta-D-Glc)(3). Mg(2+) is required as a cofactor.

The protein resides in the membrane. It catalyses the reaction ATP + H2O = ADP + phosphate + H(+). The polypeptide is Protein HYPER-SENSITIVITY-RELATED 4 (Arabidopsis thaliana (Mouse-ear cress)).